The chain runs to 1179 residues: ATP-dependent helicase/deoxyribonuclease subunit B (1179 aa).

It belongs to the helicase family. AddB/RexB type 2 subfamily. In terms of assembly, heterodimer of AddA and RexB. Requires Mg(2+) as cofactor.

Its function is as follows. The heterodimer acts as both an ATP-dependent DNA helicase and an ATP-dependent, dual-direction single-stranded exonuclease. Recognizes the chi site generating a DNA molecule suitable for the initiation of homologous recombination. This subunit has 5' -&gt; 3' nuclease activity but not helicase activity. This Lactobacillus delbrueckii subsp. bulgaricus (strain ATCC 11842 / DSM 20081 / BCRC 10696 / JCM 1002 / NBRC 13953 / NCIMB 11778 / NCTC 12712 / WDCM 00102 / Lb 14) protein is ATP-dependent helicase/deoxyribonuclease subunit B.